Consider the following 214-residue polypeptide: Pyridoxine/pyridoxamine 5'-phosphate oxidase (214 aa).

Residues 8-11 (RKSY) and lysine 67 each bind substrate. FMN contacts are provided by residues 62-67 (RVVLLK), 77-78 (YT), lysine 84, and glutamine 106. 3 residues coordinate substrate: tyrosine 124, arginine 128, and serine 132. Residues 141–142 (QS) and tryptophan 186 contribute to the FMN site. 192–194 (RLH) contacts substrate. Arginine 196 contacts FMN.

Belongs to the pyridoxamine 5'-phosphate oxidase family. In terms of assembly, homodimer. Requires FMN as cofactor.

It carries out the reaction pyridoxamine 5'-phosphate + O2 + H2O = pyridoxal 5'-phosphate + H2O2 + NH4(+). It catalyses the reaction pyridoxine 5'-phosphate + O2 = pyridoxal 5'-phosphate + H2O2. Its pathway is cofactor metabolism; pyridoxal 5'-phosphate salvage; pyridoxal 5'-phosphate from pyridoxamine 5'-phosphate: step 1/1. It functions in the pathway cofactor metabolism; pyridoxal 5'-phosphate salvage; pyridoxal 5'-phosphate from pyridoxine 5'-phosphate: step 1/1. Functionally, catalyzes the oxidation of either pyridoxine 5'-phosphate (PNP) or pyridoxamine 5'-phosphate (PMP) into pyridoxal 5'-phosphate (PLP). The chain is Pyridoxine/pyridoxamine 5'-phosphate oxidase from Flavobacterium psychrophilum (strain ATCC 49511 / DSM 21280 / CIP 103535 / JIP02/86).